A 78-amino-acid polypeptide reads, in one-letter code: Acyl carrier protein (78 aa).

A Carrier domain is found at 2-77 (SNIEQQVKKI…LAIDYINAHN (76 aa)). Ser37 carries the O-(pantetheine 4'-phosphoryl)serine modification.

It belongs to the acyl carrier protein (ACP) family. 4'-phosphopantetheine is transferred from CoA to a specific serine of apo-ACP by AcpS. This modification is essential for activity because fatty acids are bound in thioester linkage to the sulfhydryl of the prosthetic group.

Its subcellular location is the cytoplasm. Its pathway is lipid metabolism; fatty acid biosynthesis. Its function is as follows. Carrier of the growing fatty acid chain in fatty acid biosynthesis. The protein is Acyl carrier protein of Neisseria gonorrhoeae (strain ATCC 700825 / FA 1090).